We begin with the raw amino-acid sequence, 310 residues long: tRNA-cytidine(32) 2-sulfurtransferase (310 aa).

A PP-loop motif motif is present at residues 47 to 52 (SGGKDS). Cys122, Cys125, and Cys213 together coordinate [4Fe-4S] cluster.

It belongs to the TtcA family. Homodimer. Mg(2+) serves as cofactor. It depends on [4Fe-4S] cluster as a cofactor.

It localises to the cytoplasm. The enzyme catalyses cytidine(32) in tRNA + S-sulfanyl-L-cysteinyl-[cysteine desulfurase] + AH2 + ATP = 2-thiocytidine(32) in tRNA + L-cysteinyl-[cysteine desulfurase] + A + AMP + diphosphate + H(+). It participates in tRNA modification. Catalyzes the ATP-dependent 2-thiolation of cytidine in position 32 of tRNA, to form 2-thiocytidine (s(2)C32). The sulfur atoms are provided by the cysteine/cysteine desulfurase (IscS) system. The sequence is that of tRNA-cytidine(32) 2-sulfurtransferase from Haemophilus influenzae (strain 86-028NP).